Consider the following 180-residue polypeptide: Probable chorismate pyruvate-lyase (180 aa).

Substrate-binding residues include arginine 82, leucine 120, and glutamate 165.

The protein belongs to the UbiC family.

It localises to the cytoplasm. It carries out the reaction chorismate = 4-hydroxybenzoate + pyruvate. The protein operates within cofactor biosynthesis; ubiquinone biosynthesis. Its function is as follows. Removes the pyruvyl group from chorismate, with concomitant aromatization of the ring, to provide 4-hydroxybenzoate (4HB) for the ubiquinone pathway. In Photobacterium profundum (strain SS9), this protein is Probable chorismate pyruvate-lyase.